The following is a 346-amino-acid chain: Dihydroorotate dehydrogenase (quinone) (346 aa).

FMN-binding positions include 62–66 and threonine 86; that span reads AGMDK. Lysine 66 is a substrate binding site. Residue 111-115 participates in substrate binding; it reads NRMGF. FMN contacts are provided by asparagine 142 and asparagine 175. Residue asparagine 175 coordinates substrate. Serine 178 functions as the Nucleophile in the catalytic mechanism. Asparagine 180 is a substrate binding site. Residues lysine 211 and valine 239 each coordinate FMN. Residue 240–241 participates in substrate binding; it reads NT. Residues glycine 261, glycine 289, and 310-311 each bind FMN; that span reads YT.

Belongs to the dihydroorotate dehydrogenase family. Type 2 subfamily. Monomer. FMN is required as a cofactor.

It localises to the cell membrane. It carries out the reaction (S)-dihydroorotate + a quinone = orotate + a quinol. It functions in the pathway pyrimidine metabolism; UMP biosynthesis via de novo pathway; orotate from (S)-dihydroorotate (quinone route): step 1/1. Its function is as follows. Catalyzes the conversion of dihydroorotate to orotate with quinone as electron acceptor. This Thermus thermophilus (strain ATCC 27634 / DSM 579 / HB8) protein is Dihydroorotate dehydrogenase (quinone).